Consider the following 523-residue polypeptide: MESAPAAPDPAASEPGSSGSEAAAGSRETPLTQDTGRKSEAPGAGRRQSYASSSRGISVTKKTHTSQIEIIPCKICGDKSSGIHYGVITCEGCKGFFRRSQQSNATYSCPRQKNCLIDRTSRNRCQHCRLQKCLAVGMSRDAVKFGRMSKKQRDSLYAEVQKHRMQQQQRDHQQQPGEAEPLTPTYNISANGLTELHDDLSTYMDGHTPEGSKADSAVSSFYLDIQPSPDQSGLDINGIKPEPICDYTPASGFFPYCSFTNGETSPTVSMAELEHLAQNISKSHLETCQYLREELQQITWQTFLQEEIENYQNKQREVMWQLCAIKITEAIQYVVEFAKRIDGFMELCQNDQIVLLKAGSLEVVFIRMCRAFDSQNNTVYFDGKYASPDVFKSLGCEDFISFVFEFGKSLCSMHLTEDEIALFSAFVLMSADRSWLQEKVKIEKLQQKIQLALQHVLQKNHREDGILTKLICKVSTLRALCGRHTEKLMAFKAIYPDIVRLHFPPLYKELFTSEFEPAMQIDG.

Low complexity predominate over residues M1 to S26. The interval M1–T63 is disordered. Position 38 is an N6-methyllysine (K38). NR C4-type zinc fingers lie at residues C73–C93 and C109–C133. The nuclear receptor DNA-binding region spans C73–M138. Positions D154–T183 are disordered. T183 is subject to Phosphothreonine; by MAPK1. Residue K240 forms a Glycyl lysine isopeptide (Lys-Gly) (interchain with G-Cter in SUMO) linkage. An NR LBD domain is found at E272–L510. The AF-2 signature appears at L506 to F511.

The protein belongs to the nuclear hormone receptor family. NR1 subfamily. In terms of assembly, monomer. Interacts (via the DNA-binding domain) with HIF1A; the interaction enhances HIF1A transcription under hypoxia through increasing protein stability. Interacts with CEBPB; the interaction disrupts the interaction CEBPB:EP300. Interacts with the coactivators NCOA2, PPARGC1A (via LXXLL motif), EP300 and MED1. Interacts with the corepressor NCOR1. Interacts with MAGED1 and CTNNB1. Interacts with CRY1 and PER2. Interacts (via AF-2 motif) with PROX1. Interacts with NRIP1. Isoform 4 interacts (via AF-2 motif) with isoform 1 of FOXP3 (via LXXLL motif). Post-translationally, phosphorylation by conventional PKCs in neurons inhibits transcriptional activity. Phosphorylated on Thr-183 by MAPK1/ERK1 in vitro. Sumoylated by SENP1 and SENP2. Sumoylation, promoted by PIAS2, PIAS3, PIAS4 but not PIAS1, enhances the transcriptional activity. Desumoylated by SENP1. In terms of processing, ubiquitinated, leading to its degradation by the proteasome. Proteasomal degradation is required for efficient transcriptional activity and is prevented by HR. Post-translationally, monomethylated at Lys-38 by EZH2, this creates a degron recognized by a DCX (DDB1-DCAF1/VPRBP-CUL4A-RBX1) E3 ubiquitin ligase complex. In terms of tissue distribution, expressed in cerebellum, heart, liver, lung, kidney, retina and brown and white adipose tissues. Expressed in the subset of mature Th17 cells.

The protein resides in the nucleus. Functionally, nuclear receptor that binds DNA as a monomer to ROR response elements (RORE) containing a single core motif half-site 5'-AGGTCA-3' preceded by a short A-T-rich sequence. Key regulator of embryonic development, cellular differentiation, immunity, circadian rhythm as well as lipid, steroid, xenobiotics and glucose metabolism. Considered to have intrinsic transcriptional activity, have some natural ligands like oxysterols that act as agonists (25-hydroxycholesterol) or inverse agonists (7-oxygenated sterols), enhancing or repressing the transcriptional activity, respectively. Recruits distinct combinations of cofactors to target genes regulatory regions to modulate their transcriptional expression, depending on the tissue, time and promoter contexts. Regulates genes involved in photoreceptor development including OPN1SW, OPN1SM and ARR3 and skeletal muscle development with MYOD1. Required for proper cerebellum development, regulates SHH gene expression, among others, to induce granule cells proliferation as well as expression of genes involved in calcium-mediated signal transduction. Regulates the circadian expression of several clock genes, including CLOCK, BMAL1, NPAS2 and CRY1. Competes with NR1D1 for binding to their shared DNA response element on some clock genes such as BMAL1, CRY1 and NR1D1 itself, resulting in NR1D1-mediated repression or RORA-mediated activation of clock genes expression, leading to the circadian pattern of clock genes expression. Therefore influences the period length and stability of the clock. Regulates genes involved in lipid metabolism such as apolipoproteins APOA1, APOA5, APOC3 and PPARG. In liver, has specific and redundant functions with RORC as positive or negative modulator of expression of genes encoding phase I and phase II proteins involved in the metabolism of lipids, steroids and xenobiotics, such as CYP7B1 and SULT2A1. Induces a rhythmic expression of some of these genes. In addition, interplays functionally with NR1H2 and NR1H3 for the regulation of genes involved in cholesterol metabolism. Also involved in the regulation of hepatic glucose metabolism through the modulation of G6PC1 and PCK1. In adipose tissue, plays a role as negative regulator of adipocyte differentiation, probably acting through dual mechanisms. May suppress CEBPB-dependent adipogenesis through direct interaction and PPARG-dependent adipogenesis through competition for DNA-binding. Downstream of IL6 and TGFB and synergistically with RORC isoform 2, is implicated in the lineage specification of uncommitted CD4(+) T-helper (T(H)) cells into T(H)17 cells, antagonizing the T(H)1 program. Probably regulates IL17 and IL17F expression on T(H) by binding to the essential enhancer conserved non-coding sequence 2 (CNS2) in the IL17-IL17F locus. Involved in hypoxia signaling by interacting with and activating the transcriptional activity of HIF1A. May inhibit cell growth in response to cellular stress. May exert an anti-inflammatory role by inducing CHUK expression and inhibiting NF-kappa-B signaling. This is Nuclear receptor ROR-alpha (Rora) from Mus musculus (Mouse).